A 327-amino-acid polypeptide reads, in one-letter code: GMP reductase (327 aa).

Residue cysteine 176 is the Thioimidate intermediate of the active site. 205–228 (IIADGGIRTHGDIAKSIRFGASMV) provides a ligand contact to NADP(+).

It belongs to the IMPDH/GMPR family. GuaC type 2 subfamily.

The enzyme catalyses IMP + NH4(+) + NADP(+) = GMP + NADPH + 2 H(+). Catalyzes the irreversible NADPH-dependent deamination of GMP to IMP. It functions in the conversion of nucleobase, nucleoside and nucleotide derivatives of G to A nucleotides, and in maintaining the intracellular balance of A and G nucleotides. This chain is GMP reductase, found in Streptococcus pyogenes serotype M28 (strain MGAS6180).